The primary structure comprises 317 residues: Porphobilinogen deaminase (317 aa).

C245 bears the S-(dipyrrolylmethanemethyl)cysteine mark.

It belongs to the HMBS family. In terms of assembly, monomer. Dipyrromethane is required as a cofactor.

It catalyses the reaction 4 porphobilinogen + H2O = hydroxymethylbilane + 4 NH4(+). It participates in porphyrin-containing compound metabolism; protoporphyrin-IX biosynthesis; coproporphyrinogen-III from 5-aminolevulinate: step 2/4. Its pathway is porphyrin-containing compound metabolism; chlorophyll biosynthesis. Tetrapolymerization of the monopyrrole PBG into the hydroxymethylbilane pre-uroporphyrinogen in several discrete steps. This Prochlorococcus marinus (strain MIT 9313) protein is Porphobilinogen deaminase.